The sequence spans 1444 residues: DNA polymerase III PolC-type (1444 aa).

Positions 428 to 584 (YCVFDVETTG…FDAEATAYLA (157 aa)) constitute an Exonuclease domain.

Belongs to the DNA polymerase type-C family. PolC subfamily.

It localises to the cytoplasm. It catalyses the reaction DNA(n) + a 2'-deoxyribonucleoside 5'-triphosphate = DNA(n+1) + diphosphate. Functionally, required for replicative DNA synthesis. This DNA polymerase also exhibits 3' to 5' exonuclease activity. The protein is DNA polymerase III PolC-type of Listeria innocua serovar 6a (strain ATCC BAA-680 / CLIP 11262).